Consider the following 215-residue polypeptide: Tricarboxylate transporter ALT9 (215 aa).

2 Solcar repeats span residues 18 to 106 and 111 to 197; these read TTVV…LAPM and CGVS…VVRL. Helical transmembrane passes span 19-39, 112-132, and 182-202; these read TVVGNMVAGMCAGVAESVLVL, GVSTSVVAGALAGVITVYCTM, and VAGAIAFTLYEEVVRLTGFLV.

It belongs to the mitochondrial carrier (TC 2.A.29) family.

The protein resides in the mitochondrion inner membrane. The protein operates within mycotoxin biosynthesis. Functionally, tricarboxylate transporter; part of the gene cluster that mediates the biosynthesis of the host-selective toxins (HSTs) AAL-toxins, sphinganine-analog mycotoxins responsible for Alternaria stem canker on tomato by the tomato pathotype. The biosynthesis starts with the polyketide synthase ALT1-catalyzed C-16 carbon chain assembly from one starter acetyl-CoA unit with malonyl-CoA extender units. ALT1 also selectively transfers methyl groups at the first and the third cycle of chain elongation for AAL toxin. The C-16 polyketide chain is released from the enzyme by a nucleophilic attack of a carbanion, which is derived from R-carbon of glycin by decarboxylation, on the carbonyl carbon of polyketide acyl chain. This step is probably catalyzed by a pyridoxal 5'-phosphate-dependent aminoacyl transferase ALT4. The respective functions of the other enzymes encoded by the cluster have still to be elucidated. The sphingosine N-acyltransferase-like protein ALT7 seems not to act as a resistance/self-tolerance factor against the toxin in the toxin biosynthetic gene cluster, contrary to what is expected. The polypeptide is Tricarboxylate transporter ALT9 (Alternaria alternata (Alternaria rot fungus)).